We begin with the raw amino-acid sequence, 110 residues long: U1-lycotoxin-Ls1gg (110 aa).

A signal peptide spans 1–20; it reads MKFVLLFGVLLVTLFSYSSA. Positions 21–44 are excised as a propeptide; sequence EMLDDFDQADEDELLSLIEKEEAR. Cystine bridges form between C54–C71, C61–C89, and C73–C87.

Belongs to the neurotoxin 19 (CSTX) family. 03 subfamily. In terms of tissue distribution, expressed by the venom gland.

It is found in the secreted. The chain is U1-lycotoxin-Ls1gg from Lycosa singoriensis (Wolf spider).